We begin with the raw amino-acid sequence, 887 residues long: Pyruvate dehydrogenase E1 component (887 aa).

In terms of assembly, homodimer. Part of the PDH complex, consisting of multiple copies of pyruvate dehydrogenase (E1), dihydrolipoamide acetyltransferase (E2) and lipoamide dehydrogenase (E3). Thiamine diphosphate serves as cofactor.

It carries out the reaction N(6)-[(R)-lipoyl]-L-lysyl-[protein] + pyruvate + H(+) = N(6)-[(R)-S(8)-acetyldihydrolipoyl]-L-lysyl-[protein] + CO2. Component of the pyruvate dehydrogenase (PDH) complex, that catalyzes the overall conversion of pyruvate to acetyl-CoA and CO(2). The sequence is that of Pyruvate dehydrogenase E1 component (aceE) from Buchnera aphidicola subsp. Acyrthosiphon pisum (strain APS) (Acyrthosiphon pisum symbiotic bacterium).